A 408-amino-acid chain; its full sequence is Acetate kinase (408 aa).

Residue asparagine 7 coordinates Mg(2+). Lysine 14 lines the ATP pocket. Residue arginine 91 coordinates substrate. Aspartate 148 (proton donor/acceptor) is an active-site residue. ATP is bound by residues histidine 208–glycine 212, aspartate 283–arginine 285, and glycine 331–asparagine 335. Glutamate 384 is a binding site for Mg(2+).

Belongs to the acetokinase family. Homodimer. It depends on Mg(2+) as a cofactor. Requires Mn(2+) as cofactor.

Its subcellular location is the cytoplasm. It carries out the reaction acetate + ATP = acetyl phosphate + ADP. Its pathway is metabolic intermediate biosynthesis; acetyl-CoA biosynthesis; acetyl-CoA from acetate: step 1/2. Catalyzes the formation of acetyl phosphate from acetate and ATP. Can also catalyze the reverse reaction. The chain is Acetate kinase from Methanosarcina mazei (Methanosarcina frisia).